A 230-amino-acid chain; its full sequence is Flagellar L-ring protein (230 aa).

The first 15 residues, 1–15 (MSRPPLLSSACLAAT), serve as a signal peptide directing secretion. Residue Cys-16 is the site of N-palmitoyl cysteine attachment. Cys-16 carries S-diacylglycerol cysteine lipidation.

It belongs to the FlgH family. As to quaternary structure, the basal body constitutes a major portion of the flagellar organelle and consists of four rings (L,P,S, and M) mounted on a central rod.

The protein resides in the cell outer membrane. It localises to the bacterial flagellum basal body. In terms of biological role, assembles around the rod to form the L-ring and probably protects the motor/basal body from shearing forces during rotation. The protein is Flagellar L-ring protein of Xanthomonas oryzae pv. oryzae (strain MAFF 311018).